A 439-amino-acid chain; its full sequence is Probable eukaryotic translation initiation factor 5-1 (439 aa).

29–36 (GRGNGIKT) lines the GTP pocket. A disordered region spans residues 143 to 245 (LKNPPEQKKS…REAAEKRMKE (103 aa)). The span at 147–186 (PEQKKSSKDKKSMRRAEKERLREGEAADEEMRKLKKEAAS) shows a compositional bias: basic and acidic residues. Positions 214–228 (DENDQADSEEDDDDV) are enriched in acidic residues. A Phosphothreonine modification is found at Thr232. Residues 234 to 245 (TSREAAEKRMKE) show a composition bias toward basic and acidic residues. A W2 domain is found at 283-439 (KIPENAHEKL…QNAESESEEE (157 aa)). 2 positions are modified to phosphoserine: Ser434 and Ser436.

Belongs to the eIF-2-beta/eIF-5 family.

Catalyzes the hydrolysis of GTP bound to the 40S ribosomal initiation complex (40S.mRNA.Met-tRNA[F].eIF-2.GTP) with the subsequent joining of a 60S ribosomal subunit resulting in the release of eIF-2 and the guanine nucleotide. The subsequent joining of a 60S ribosomal subunit results in the formation of a functional 80S initiation complex (80S.mRNA.Met-tRNA[F]). In Arabidopsis thaliana (Mouse-ear cress), this protein is Probable eukaryotic translation initiation factor 5-1.